A 282-amino-acid polypeptide reads, in one-letter code: Fibrinogen-like protein A (282 aa).

The N-terminal stretch at 1–24 is a signal peptide; sequence MFSFIMKAAILLILVGCISFCISS. The region spanning 61-281 is the Fibrinogen C-terminal domain; the sequence is SHSPEYPRDC…FAEMKLRNRS (221 aa). Cystine bridges form between cysteine 70/cysteine 101 and cysteine 224/cysteine 240.

This is Fibrinogen-like protein A from Apostichopus parvimensis (Warty sea cucumber).